A 695-amino-acid polypeptide reads, in one-letter code: Centrosomal protein of 89 kDa (695 aa).

Disordered stretches follow at residues 24-54 (LIPA…RPRS), 66-147 (TGRT…GDED), and 167-272 (AVPL…SEVL). Over residues 34–49 (PAVPRTPPPRSPNPSP) the composition is skewed to pro residues. Composition is skewed to acidic residues over residues 124-146 (DEDD…EGDE) and 178-189 (DSDVDEETEDSA). Positions 209-226 (GQTQPSSLPQPRSVSRRS) are enriched in polar residues. Basic and acidic residues predominate over residues 251 to 271 (TNKESPVRVNERDRSSEDSEV). Coiled-coil stretches lie at residues 276–368 (LEVQ…RYQA) and 406–632 (AYED…LEKE).

The protein localises to the cytoplasm. The protein resides in the cytosol. It is found in the cytoskeleton. Its subcellular location is the microtubule organizing center. It localises to the centrosome. The protein localises to the spindle pole. The protein resides in the centriole. It is found in the mitochondrion intermembrane space. Required for ciliogenesis. Also plays a role in mitochondrial metabolism where it may modulate complex IV activity. In Danio rerio (Zebrafish), this protein is Centrosomal protein of 89 kDa (cep89).